A 271-amino-acid chain; its full sequence is uncharacterized protein (271 aa).

A disordered region spans residues 233–261 (VEPDPNRFSEPVDQPTLVEEGKEARRTER). Residues 251-261 (EEGKEARRTER) are compositionally biased toward basic and acidic residues.

May be involved in swimming motility. This is an uncharacterized protein from Haloferax volcanii (strain ATCC 29605 / DSM 3757 / JCM 8879 / NBRC 14742 / NCIMB 2012 / VKM B-1768 / DS2) (Halobacterium volcanii).